A 101-amino-acid chain; its full sequence is Large ribosomal subunit protein bL28 (101 aa).

It belongs to the bacterial ribosomal protein bL28 family.

The chain is Large ribosomal subunit protein bL28 from Methylorubrum extorquens (strain CM4 / NCIMB 13688) (Methylobacterium extorquens).